Consider the following 504-residue polypeptide: Lysine--tRNA ligase (504 aa).

Mg(2+) contacts are provided by Glu404 and Glu411.

It belongs to the class-II aminoacyl-tRNA synthetase family. In terms of assembly, homodimer. The cofactor is Mg(2+).

It localises to the cytoplasm. The enzyme catalyses tRNA(Lys) + L-lysine + ATP = L-lysyl-tRNA(Lys) + AMP + diphosphate. The polypeptide is Lysine--tRNA ligase (Aliarcobacter butzleri (strain RM4018) (Arcobacter butzleri)).